The chain runs to 142 residues: Neuritin (142 aa).

Positions 1–27 (MGLKLNGRYISLILAVQIAYLVQAVRA) are cleaved as a signal peptide. Gly116 carries the GPI-anchor amidated glycine lipid modification. The propeptide at 117 to 142 (AAGSLLPAFPVLLVSLSAALATWLSF) is removed in mature form.

This sequence belongs to the neuritin family. As to quaternary structure, component of the outer core of AMPAR complex. AMPAR complex consists of an inner core made of 4 pore-forming GluA/GRIA proteins (GRIA1, GRIA2, GRIA3 and GRIA4) and 4 major auxiliary subunits arranged in a twofold symmetry. One of the two pairs of distinct binding sites is occupied either by CNIH2, CNIH3 or CACNG2, CACNG3. The other harbors CACNG2, CACNG3, CACNG4, CACNG8 or GSG1L. This inner core of AMPAR complex is complemented by outer core constituents binding directly to the GluA/GRIA proteins at sites distinct from the interaction sites of the inner core constituents. Outer core constituents include at least PRRT1, PRRT2, CKAMP44/SHISA9, FRRS1L and NRN1. The proteins of the inner and outer core serve as a platform for other, more peripherally associated AMPAR constituents. Alone or in combination, these auxiliary subunits control the gating and pharmacology of the AMPAR complex and profoundly impact their biogenesis and protein processing.

It is found in the cell membrane. Its subcellular location is the synapse. In terms of biological role, promotes neurite outgrowth and especially branching of neuritic processes in primary hippocampal and cortical cells. This Homo sapiens (Human) protein is Neuritin (NRN1).